Reading from the N-terminus, the 166-residue chain is Sec-independent protein translocase protein TatB (166 aa).

The chain crosses the membrane as a helical span at residues 2 to 22; sequence FDGIGFMELLLIGVLGLVVLG. Residues 69–166 are disordered; sequence SKGLSNLSPE…DTRSNPKANG (98 aa). 2 stretches are compositionally biased toward polar residues: residues 88-97 and 112-132; these read QAAQSVNRPY and QIHS…SQAN. The span at 133–153 shows a compositional bias: low complexity; sequence PTATVEASPTSASPATPSEPS. Residues 155 to 166 show a composition bias toward polar residues; that stretch reads GADTRSNPKANG.

Belongs to the TatB family. As to quaternary structure, the Tat system comprises two distinct complexes: a TatABC complex, containing multiple copies of TatA, TatB and TatC subunits, and a separate TatA complex, containing only TatA subunits. Substrates initially bind to the TatABC complex, which probably triggers association of the separate TatA complex to form the active translocon.

It is found in the cell inner membrane. Functionally, part of the twin-arginine translocation (Tat) system that transports large folded proteins containing a characteristic twin-arginine motif in their signal peptide across membranes. Together with TatC, TatB is part of a receptor directly interacting with Tat signal peptides. TatB may form an oligomeric binding site that transiently accommodates folded Tat precursor proteins before their translocation. This chain is Sec-independent protein translocase protein TatB, found in Shewanella baltica (strain OS223).